We begin with the raw amino-acid sequence, 430 residues long: MTRSEALFEQAKKTIPGGVNSPVRAFNGVGGSPLFIEKADGAYIYDADGKAYIDYVGSWGPMILGHNHPKIREAVLAAVHNGLSFGAPTELEVQMAEKVIAMVPSIEQVRMVSSGTEATMSAIRLARGFTNRDKILKFEGCYHGHADCLLVKAGSGALTLGQPSSPGIPEDFAKHTLTAVYNDLDSVRTLFEQYPIEIACIIIEPVAGNMNCIPPIPGFLEGLRTMCDEFGALLIIDEVMTGFRVSRSGAQGHYGVTPDLTTLGKVIGGGMPVGAFGGRKDVMQFIAPTGPVYQAGTLSGNPIAMSAGLAQMEALCEEGLYEALSAKTKRIAEGFKAAADKHGIPMAINYVGGMFGFFFTEQEQITRFDQVTKCNIEHFRTFYHGMLDEGVYLAPSAYEAGFLSMAHGEEELRLTLEAADRVLARMKAAM.

Lys-265 carries the post-translational modification N6-(pyridoxal phosphate)lysine.

This sequence belongs to the class-III pyridoxal-phosphate-dependent aminotransferase family. HemL subfamily. In terms of assembly, homodimer. Pyridoxal 5'-phosphate is required as a cofactor.

The protein localises to the cytoplasm. The catalysed reaction is (S)-4-amino-5-oxopentanoate = 5-aminolevulinate. It participates in porphyrin-containing compound metabolism; protoporphyrin-IX biosynthesis; 5-aminolevulinate from L-glutamyl-tRNA(Glu): step 2/2. The protein is Glutamate-1-semialdehyde 2,1-aminomutase of Shewanella sp. (strain MR-4).